The following is a 125-amino-acid chain: MSDKYIGDSHLEETGEEKQDSQEKEAVTPEKAEEQKLKAKYPNLGQKPGGSDFLMKRLQKGQKYFDSGDYNMAKAKMKNKQLPCAGPDKNLVTGDHIPTPQDLPQRKSSLVTSKLAGHVEDLHQV.

Over residues 1-37 (MSDKYIGDSHLEETGEEKQDSQEKEAVTPEKAEEQKL) the composition is skewed to basic and acidic residues. The interval 1–53 (MSDKYIGDSHLEETGEEKQDSQEKEAVTPEKAEEQKLKAKYPNLGQKPGGSDF) is disordered. Position 28 is a phosphothreonine; by CDK2 (T28). At S67 the chain carries Phosphoserine; by GWL. The disordered stretch occupies residues 81–108 (QLPCAGPDKNLVTGDHIPTPQDLPQRKS). Residue T99 is modified to Phosphothreonine; by CDK2. Position 109 is a phosphoserine; by PKA (S109).

Belongs to the endosulfine family. Phosphorylation at Ser-67 by gwl during mitosis is essential for interaction with ppp2r2d (PR55-delta) and subsequent inactivation of PP2A.

The protein localises to the cytoplasm. Its function is as follows. Protein phosphatase inhibitor that specifically inhibits protein phosphatase 2A (PP2A) during mitosis. When phosphorylated at Ser-67 during mitosis, specifically interacts with ppp2r2d (PR55-delta) and inhibits its activity, leading to inactivation of PP2A, an essential condition to keep cyclin-B1-CDK1 activity high during M phase. This is Alpha-endosulfine (ensa) from Xenopus tropicalis (Western clawed frog).